Reading from the N-terminus, the 818-residue chain is Mediator of RNA polymerase II transcription subunit 16 (818 aa).

WD repeat units follow at residues 86-125 (SSKS…INLW), 296-342 (LDGR…QSVH), and 615-666 (RLPE…PVYT). The tract at residues 175 to 524 (TLSGFGGVAS…ANFLALKSNI (350 aa)) is interaction with Dif.

The protein belongs to the Mediator complex subunit 16 family. In terms of assembly, component of the Mediator complex. Interacts with Dif.

The protein resides in the nucleus. Its function is as follows. Component of the Mediator complex, a coactivator involved in the regulated transcription of nearly all RNA polymerase II-dependent genes. Mediator functions as a bridge to convey information from gene-specific regulatory proteins to the basal RNA polymerase II transcription machinery. Mediator is recruited to promoters by direct interactions with regulatory proteins and serves as a scaffold for the assembly of a functional preinitiation complex with RNA polymerase II and the general transcription factors. Required for activated transcription of the MtnA, MtnB and MtnD genes. Required for transcriptional activation in response to lipopolysacchardie (LPS). This Drosophila melanogaster (Fruit fly) protein is Mediator of RNA polymerase II transcription subunit 16 (MED16).